Here is a 386-residue protein sequence, read N- to C-terminus: Eukaryotic translation initiation factor 3 subunit M (386 aa).

The 163-residue stretch at 181 to 343 folds into the PCI domain; sequence NSELASKVMI…RKVHISSTMH (163 aa).

Belongs to the eIF-3 subunit M family. In terms of assembly, component of the eukaryotic translation initiation factor 3 (eIF-3) complex.

Its subcellular location is the cytoplasm. Functionally, component of the eukaryotic translation initiation factor 3 (eIF-3) complex, which is involved in protein synthesis of a specialized repertoire of mRNAs and, together with other initiation factors, stimulates binding of mRNA and methionyl-tRNAi to the 40S ribosome. The eIF-3 complex specifically targets and initiates translation of a subset of mRNAs involved in cell proliferation. The chain is Eukaryotic translation initiation factor 3 subunit M from Aedes aegypti (Yellowfever mosquito).